The following is a 247-amino-acid chain: Phycobilisome rod-core linker polypeptide CpcG2 (247 aa).

One can recognise a PBS-linker domain in the interval 11–189; sequence SSQNQRVPGY…YWRDKLESER (179 aa). The disordered stretch occupies residues 223-247; it reads PDTTRNTTPTGIPISVNPSANFPVR.

It belongs to the phycobilisome linker protein family. In terms of assembly, part of the phycobilisome, a hemidiscoidal structure that is composed of two distinct substructures: a core complex and a number of rods radiating from the core.

It is found in the cellular thylakoid membrane. In terms of biological role, rod-core linker protein required for attachment of phycocyanin to allophycocyanin in cores of phycobilisomes. Linker polypeptides determine the state of aggregation and the location of the disk-shaped phycobiliprotein units within the phycobilisome and modulate their spectroscopic properties in order to mediate a directed and optimal energy transfer. The polypeptide is Phycobilisome rod-core linker polypeptide CpcG2 (Nostoc sp. (strain PCC 7120 / SAG 25.82 / UTEX 2576)).